We begin with the raw amino-acid sequence, 150 residues long: UPF0756 membrane protein PC1_1142 (150 aa).

The next 4 membrane-spanning stretches (helical) occupy residues 1–21, 51–71, 82–102, and 127–147; these read MAYL…GIIS, YGLS…IASG, FLHW…WLGG, and ALFR…SLLI.

The protein belongs to the UPF0756 family.

The protein resides in the cell membrane. The chain is UPF0756 membrane protein PC1_1142 from Pectobacterium carotovorum subsp. carotovorum (strain PC1).